Consider the following 213-residue polypeptide: 3-oxoadipate CoA-transferase subunit B (213 aa).

The active site involves Glu50.

It belongs to the 3-oxoacid CoA-transferase subunit B family. Heterodimer.

The catalysed reaction is 3-oxoadipate + succinyl-CoA = 3-oxoadipyl-CoA + succinate. The protein operates within aromatic compound metabolism; beta-ketoadipate pathway; acetyl-CoA and succinyl-CoA from 3-oxoadipate: step 1/2. This chain is 3-oxoadipate CoA-transferase subunit B (pcaJ), found in Pseudomonas putida (strain ATCC 47054 / DSM 6125 / CFBP 8728 / NCIMB 11950 / KT2440).